Reading from the N-terminus, the 295-residue chain is Small ribosomal subunit protein uS2 (295 aa).

The interval 242–295 (APVEPTLARELAPEAPAPEAPAEEAPAAEAAPAAEAAPAAEAAPAEASSEEQAG) is disordered. The span at 264–288 (EEAPAAEAAPAAEAAPAAEAAPAEA) shows a compositional bias: low complexity.

Belongs to the universal ribosomal protein uS2 family.

This Phenylobacterium zucineum (strain HLK1) protein is Small ribosomal subunit protein uS2.